A 329-amino-acid chain; its full sequence is MAVTMAEITKLRKISGAGMMDCKNALTEANGDIDKAMEIIRKKGQAVAAKRSDREASEGCVLAKKDGEFAAIIALKCETDFVAKNADFVALTQAILDAAVANRCKTLEEVKALPMGNGTVQDAVTDRSGITGEKMELDGYNVVEGAYTSIYNHQGNNQLCTIVAMNKEAEAAAHGVAMQIAAMNPIAIDEAGVPESVKEAEIQVAIDKTKKEQVDKAVEVALKKAGINPAHVDSEEHMESNKAKGWITDEDIAKAKEIIATVSAEKAANLPQQMIENIAKGRLGKFLKEVCLLNQEDIMDGKKTVREVLKEADPELQIVAFKRFTLRAE.

Positions 79–82 are involved in Mg(2+) ion dislocation from EF-Tu; the sequence is TDFV.

This sequence belongs to the EF-Ts family.

The protein localises to the cytoplasm. Its function is as follows. Associates with the EF-Tu.GDP complex and induces the exchange of GDP to GTP. It remains bound to the aminoacyl-tRNA.EF-Tu.GTP complex up to the GTP hydrolysis stage on the ribosome. The chain is Elongation factor Ts from Phocaeicola vulgatus (strain ATCC 8482 / DSM 1447 / JCM 5826 / CCUG 4940 / NBRC 14291 / NCTC 11154) (Bacteroides vulgatus).